Here is a 1012-residue protein sequence, read N- to C-terminus: Structural polyprotein (1012 aa).

Position 30 (Asp-30) interacts with a divalent metal cation. The Peptidase S50 domain occupies 513–755; it reads ADKGYEVVAN…AGRQYHLAMA (243 aa). The active-site Nucleophile is Ser-652. Lys-692 is a catalytic residue. Disordered stretches follow at residues 837-857 and 968-1012; these read GYGV…KDTR and TAME…EDLE. Residues 975 to 986 show a composition bias toward basic residues; it reads RNPRRAPPKPKP. The segment at 1003 to 1012 is interaction with VP1 protein; the sequence is IRTVSDEDLE.

Homotrimer. A central divalent metal stabilizes the VP2 trimer. Interacts with host ITGA4/ITGB1. In terms of assembly, homodimer. Interacts (via C-terminus) with VP1 in the cytoplasm. Interacts with VP2. Post-translationally, specific enzymatic cleavages yield mature proteins. The capsid assembly seems to be regulated by polyprotein processing. The protease VP4 cleaves itself off the polyprotein, thus releasing pre-VP2 and VP3 within the infected cell. During capsid assembly, the C-terminus of pre-VP2 is further processed by VP4, giving rise to VP2, the external capsid protein and three small peptides that all stay closely associated with the capsid.

Its subcellular location is the virion. It localises to the host cytoplasm. Its function is as follows. Capsid protein VP2 self assembles to form an icosahedral capsid with a T=13 symmetry, about 70 nm in diameter, and consisting of 260 VP2 trimers. The capsid encapsulates the genomic dsRNA. VP2 is also involved in attachment and entry into the host cell by interacting with host ITGA4/ITGB1. Functionally, the precursor of VP2 plays an important role in capsid assembly. First, pre-VP2 and VP2 oligomers assemble to form a procapsid. Then, the pre-VP2 intermediates may be processed into VP2 proteins by proteolytic cleavage mediated by VP4 to obtain the mature virion. The final capsid is composed of pentamers and hexamers but VP2 has a natural tendency to assemble into all-pentameric structures. Therefore pre-VP2 may be required to allow formation of the hexameric structures. Protease VP4 is a serine protease that cleaves the polyprotein into its final products. Pre-VP2 is first partially cleaved, and may be completely processed by VP4 upon capsid maturation. In terms of biological role, capsid protein VP3 plays a key role in virion assembly by providing a scaffold for the capsid made of VP2. May self-assemble to form a T=4-like icosahedral inner-capsid composed of at least 180 trimers. Plays a role in genomic RNA packaging by recruiting VP1 into the capsid and interacting with the dsRNA genome segments to form a ribonucleoprotein complex. Additionally, the interaction of the VP3 C-terminal tail with VP1 removes the inherent structural blockade of the polymerase active site. Thus, VP3 can also function as a transcriptional activator. Its function is as follows. Structural peptide 1 is a small peptide derived from pre-VP2 C-terminus. It destabilizes and perforates cell membranes, suggesting a role during entry. Functionally, structural peptide 2 is a small peptide derived from pVP2 C-terminus. It is not essential for the virus viability, but viral growth is affected when missing. Structural peptide 3 is a small peptide derived from pVP2 C-terminus. It is not essential for the virus viability, but viral growth is affected when missing. In terms of biological role, structural peptide 4 is a small peptide derived from pVP2 C-terminus. It is essential for the virus viability. This chain is Structural polyprotein, found in Gallus gallus (Chicken).